The following is an 845-amino-acid chain: Complement component C7 (845 aa).

The N-terminal stretch at Met-1–Ala-22 is a signal peptide. The 54-residue stretch at Asn-27–Pro-80 folds into the TSP type-1 1 domain. Cystine bridges form between Cys-28–Cys-63, Cys-39–Cys-73, Cys-42–Cys-79, Cys-85–Cys-96, Cys-91–Cys-109, and Cys-103–Cys-119. The 37-residue stretch at Gly-84–Glu-120 folds into the LDL-receptor class A domain. One can recognise an MACPF domain in the interval Val-122–His-456. The N-linked (GlcNAc...) asparagine glycan is linked to Asn-124. Cys-127 and Cys-164 are oxidised to a cystine. An N-linked (GlcNAc...) asparagine glycan is attached at Asn-201. 21 cysteine pairs are disulfide-bonded: Cys-336–Cys-353, Cys-433–Cys-560, Cys-455–Cys-505, Cys-457–Cys-473, Cys-460–Cys-475, Cys-477–Cys-486, Cys-512–Cys-545, Cys-523–Cys-535, Cys-571–Cys-613, Cys-599–Cys-626, Cys-631–Cys-673, Cys-659–Cys-688, Cys-703–Cys-714, Cys-716–Cys-751, Cys-722–Cys-744, Cys-729–Cys-764, Cys-774–Cys-783, Cys-777–Cys-790, Cys-792–Cys-826, Cys-798–Cys-819, and Cys-806–Cys-839. An EGF-like domain is found at Cys-457–Glu-487. The 50-residue stretch at Asp-500–Asp-549 folds into the TSP type-1 2 domain. CCP stretches follow at residues Cys-545–Glu-615 and Asp-616–Thr-693. Sushi domains lie at Glu-569–Lys-628 and Leu-629–Gln-690. 2 factor I module (FIM) regions span residues Thr-695–Glu-771 and Lys-772–Ala-844. Residue Asn-755 is glycosylated (N-linked (GlcNAc...) asparagine).

Belongs to the complement C6/C7/C8/C9 family. Monomer or dimer; as a C5b-7 complex it can also form multimeric rosettes. Component of the membrane attack complex (MAC), composed of complement C5b, C6, C7, C8A, C8B, C8G and multiple copies of the pore-forming subunit C9. In terms of processing, C-, N- and O-glycosylated. O-glycosylated with core 1 or possibly core 8 glycans.

The protein localises to the secreted. It localises to the target cell membrane. Membrane attack complex (MAC) assembly is inhibited by CD59, thereby protecting self-cells from damage during complement activation. MAC assembly is also inhibited by clusterin (CLU) chaperones that inhibit polymerization of C9. Component of the membrane attack complex (MAC), a multiprotein complex activated by the complement cascade, which inserts into a target cell membrane and forms a pore, leading to target cell membrane rupture and cell lysis. The MAC is initiated by proteolytic cleavage of C5 into complement C5b in response to the classical, alternative, lectin and GZMK complement pathways. The complement pathways consist in a cascade of proteins that leads to phagocytosis and breakdown of pathogens and signaling that strengthens the adaptive immune system. C7 serves as a membrane anchor. During MAC assembly, associates with C5b and C6 to form the C5b-7 complex, a key lipophilic precursor of the MAC complex, which associates with the outer leaflet and reduces the energy for membrane bending. The protein is Complement component C7 of Mus musculus (Mouse).